A 334-amino-acid chain; its full sequence is Protein-glutamate methylesterase/protein-glutamine glutaminase 1 (334 aa).

Residues 2–120 (NIGIVNDLPL…GAAGDTTKLL (119 aa)) enclose the Response regulatory domain. Asp-53 is modified (4-aspartylphosphate). In terms of domain architecture, CheB-type methylesterase spans 145–334 (RAGGGPLIAI…AGELAALARI (190 aa)). Active-site residues include Ser-157, His-184, and Asp-277.

This sequence belongs to the CheB family. In terms of processing, phosphorylated by CheA. Phosphorylation of the N-terminal regulatory domain activates the methylesterase activity.

The protein resides in the cytoplasm. The catalysed reaction is [protein]-L-glutamate 5-O-methyl ester + H2O = L-glutamyl-[protein] + methanol + H(+). It carries out the reaction L-glutaminyl-[protein] + H2O = L-glutamyl-[protein] + NH4(+). Functionally, involved in chemotaxis. Part of a chemotaxis signal transduction system that modulates chemotaxis in response to various stimuli. Catalyzes the demethylation of specific methylglutamate residues introduced into the chemoreceptors (methyl-accepting chemotaxis proteins or MCP) by CheR. Also mediates the irreversible deamidation of specific glutamine residues to glutamic acid. The polypeptide is Protein-glutamate methylesterase/protein-glutamine glutaminase 1 (Burkholderia lata (strain ATCC 17760 / DSM 23089 / LMG 22485 / NCIMB 9086 / R18194 / 383)).